The chain runs to 180 residues: tRNA (cytidine(56)-2'-O)-methyltransferase (180 aa).

S-adenosyl-L-methionine is bound by residues leucine 83, 115 to 119 (GAEKV), and 133 to 140 (VGNQPHSE).

The protein belongs to the aTrm56 family. In terms of assembly, homodimer.

It is found in the cytoplasm. The catalysed reaction is cytidine(56) in tRNA + S-adenosyl-L-methionine = 2'-O-methylcytidine(56) in tRNA + S-adenosyl-L-homocysteine + H(+). Its function is as follows. Specifically catalyzes the AdoMet-dependent 2'-O-ribose methylation of cytidine at position 56 in tRNAs. This is tRNA (cytidine(56)-2'-O)-methyltransferase from Methanococcus aeolicus (strain ATCC BAA-1280 / DSM 17508 / OCM 812 / Nankai-3).